Consider the following 30-residue polypeptide: Dermaseptin-3.1TR (30 aa).

As to expression, expressed by the skin glands.

The protein localises to the secreted. Functionally, has antimicrobial activity. The chain is Dermaseptin-3.1TR from Phyllomedusa trinitatis (Trinidad leaf frog).